The following is a 323-amino-acid chain: tRNA dimethylallyltransferase (323 aa).

13-20 serves as a coordination point for ATP; it reads GPTASGKT. 15–20 is a binding site for substrate; the sequence is TASGKT. 4 interaction with substrate tRNA regions span residues 42–45, 166–170, 251–256, and 284–291; these read DSAL, QRIQR, RCVGYR, and KRQITWLR.

It belongs to the IPP transferase family. In terms of assembly, monomer. Requires Mg(2+) as cofactor.

It catalyses the reaction adenosine(37) in tRNA + dimethylallyl diphosphate = N(6)-dimethylallyladenosine(37) in tRNA + diphosphate. Functionally, catalyzes the transfer of a dimethylallyl group onto the adenine at position 37 in tRNAs that read codons beginning with uridine, leading to the formation of N6-(dimethylallyl)adenosine (i(6)A). The sequence is that of tRNA dimethylallyltransferase from Acidovorax sp. (strain JS42).